Reading from the N-terminus, the 1313-residue chain is Ataxin-2 (1313 aa).

The segment covering 1–12 has biased composition (low complexity); that stretch reads MRSAAAAPRSPA. The interval 1–255 is disordered; sequence MRSAAAAPRS…RNSNKGLPQS (255 aa). Residues 48–65 show a composition bias toward pro residues; it reads GPYPSAAPPPPGPGPPPS. Composition is skewed to low complexity over residues 104 to 114, 141 to 154, 166 to 187, and 204 to 234; these read FVVLLLPLASP, ARPAPGCPRPACEP, QQQQQQQQQQQQQQQQQQQQQQ, and LLASPAAAPSPSSSSVSSSSATAPSSVVAAT. Residues 235 to 244 show a composition bias toward gly residues; sequence SGGGRPGLGR. Phosphoserine is present on Ser248. Positions 267-344 constitute a Sm domain; the sequence is RMVHILTSVV…FVVVQFKDMD (78 aa). Residues Ser393, Ser466, Ser478, Ser508, and Ser554 each carry the phosphoserine modification. 2 stretches are compositionally biased toward basic and acidic residues: residues 459-471 and 478-492; these read ALENDDRSEEEKY and SSEREGHSINTRENK. Disordered regions lie at residues 459–954 and 1137–1219; these read ALEN…HQQP and NATL…NSFP. The segment covering 508-544 has biased composition (polar residues); that stretch reads SGRQNSPRMGQPGSGSMPSRSTSHTSDFNPNSGSDQR. Pro residues predominate over residues 552–562; that stretch reads WPSPCPSPSSR. Over residues 563–581 the composition is skewed to low complexity; the sequence is PPSRYQSGPNSLPPRAATP. A compositionally biased stretch (pro residues) spans 582–598; that stretch reads TRPPSRPPSRPSRPPSH. At Ser624 the chain carries Phosphoserine. The span at 627–637 shows a compositional bias: basic residues; sequence AQRHPRNHRVS. Arg640 carries the post-translational modification Asymmetric dimethylarginine; alternate. An Omega-N-methylarginine; alternate modification is found at Arg640. Ser642 carries the phosphoserine modification. Residues 666 to 681 are compositionally biased toward low complexity; that stretch reads TSPSGGTWSSVVSGVP. Residue Ser684 is modified to Phosphoserine. Residues 693–703 are compositionally biased toward polar residues; the sequence is PRQNSIGNTPS. Ser728 is subject to Phosphoserine. Thr741 is subject to Phosphothreonine. The segment covering 768 to 777 has biased composition (polar residues); that stretch reads PNETSPSFSK. Phosphoserine occurs at positions 772 and 784. A compositionally biased stretch (basic and acidic residues) spans 788–804; it reads SEHRKQIDDLKKFKNDF. The span at 807 to 820 shows a compositional bias: polar residues; it reads QPSSTSESMDQLLN. Over residues 821–844 the composition is skewed to basic and acidic residues; it reads KNREGEKSRDLIKDKIEPSAKDSF. Positions 847–871 are enriched in low complexity; it reads NSSSNCTSGSSKPNSPSISPSILSN. Residues Ser856, Ser857, Ser861, Ser865, Ser867, Ser888, and Ser889 each carry the phosphoserine modification. Polar residues predominate over residues 880 to 891; it reads VTSQGVQTSSPA. Lys893 is covalently cross-linked (Glycyl lysine isopeptide (Lys-Gly) (interchain with G-Cter in SUMO2)). The span at 893–910 shows a compositional bias: basic and acidic residues; that stretch reads KQEKDDKEEKKDAAEQVR. Low complexity-rich tracts occupy residues 925–936 and 1155–1192; these read SFSQPKPSTTPT and GQQQSQHGGSHPAPSPVQHHQHQAAQALHLASPQQQSA. The segment covering 1206–1219 has biased composition (polar residues); that stretch reads TPASNTQSPQNSFP.

This sequence belongs to the ataxin-2 family. As to quaternary structure, monomer. Can also form homodimers. Interacts with TARDBP; the interaction is RNA-dependent. Interacts with RBFOX1. Interacts with polyribosomes. Interacts with SH3GL2 and SH3GL3. Interacts with SH3KBP1 and CBL. Interacts with EGFR. Interacts with ATXN2L. As to expression, expressed in the brain, heart, liver, skeletal muscle, pancreas and placenta. Isoform 1 is predominant in the brain and spinal cord. Isoform 4 is more abundant in the cerebellum. In the brain, broadly expressed in the amygdala, caudate nucleus, corpus callosum, hippocampus, hypothalamus, substantia nigra, subthalamic nucleus and thalamus.

Its subcellular location is the cytoplasm. Functionally, involved in EGFR trafficking, acting as negative regulator of endocytic EGFR internalization at the plasma membrane. The polypeptide is Ataxin-2 (ATXN2) (Homo sapiens (Human)).